A 306-amino-acid chain; its full sequence is Lipoyl synthase 2 (306 aa).

The [4Fe-4S] cluster site is built by cysteine 49, cysteine 54, cysteine 60, cysteine 75, cysteine 79, cysteine 82, and serine 300. Positions 61–289 (YAAGTATFLL…AEVACKLGFA (229 aa)) constitute a Radical SAM core domain.

Belongs to the radical SAM superfamily. Lipoyl synthase family. [4Fe-4S] cluster serves as cofactor.

Its subcellular location is the cytoplasm. It catalyses the reaction [[Fe-S] cluster scaffold protein carrying a second [4Fe-4S](2+) cluster] + N(6)-octanoyl-L-lysyl-[protein] + 2 oxidized [2Fe-2S]-[ferredoxin] + 2 S-adenosyl-L-methionine + 4 H(+) = [[Fe-S] cluster scaffold protein] + N(6)-[(R)-dihydrolipoyl]-L-lysyl-[protein] + 4 Fe(3+) + 2 hydrogen sulfide + 2 5'-deoxyadenosine + 2 L-methionine + 2 reduced [2Fe-2S]-[ferredoxin]. Its pathway is protein modification; protein lipoylation via endogenous pathway; protein N(6)-(lipoyl)lysine from octanoyl-[acyl-carrier-protein]: step 2/2. In terms of biological role, catalyzes the radical-mediated insertion of two sulfur atoms into the C-6 and C-8 positions of the octanoyl moiety bound to the lipoyl domains of lipoate-dependent enzymes, thereby converting the octanoylated domains into lipoylated derivatives. This Prochlorococcus marinus (strain MIT 9313) protein is Lipoyl synthase 2.